Reading from the N-terminus, the 290-residue chain is Arylamine N-acetyltransferase 2 (290 aa).

Catalysis depends on C68, which acts as the Acyl-thioester intermediate. Residues T103 and G104 each contribute to the CoA site. 106 to 107 is a substrate binding site; the sequence is VH. Active-site residues include H107 and D122. CoA contacts are provided by Y208, T214, and S287.

It belongs to the arylamine N-acetyltransferase family.

It localises to the cytoplasm. It carries out the reaction an arylamine + acetyl-CoA = an N-acetylarylamine + CoA. The catalysed reaction is an N-hydroxyarylamine + acetyl-CoA = an N-acetoxyarylamine + CoA. Functionally, catalyzes the N- or O-acetylation of various arylamine and heterocyclic amine substrates. Participates in the detoxification of a plethora of hydrazine and arylamine drugs, and is able to bioactivate several known carcinogens. This chain is Arylamine N-acetyltransferase 2 (NAT2), found in Homo sapiens (Human).